A 284-amino-acid chain; its full sequence is MSAAISRNWPAPAKLNLFLHINGRRTDGYHELQTLFQFIDYCDMLDFKVTDSSELILHSNMAGVVADSDNLILRAAKSLQQMTSFKGGAEIWLDKRLPMGGGLGGGSSDAATTLVALNTLWNTQLSTAELAKIGLKLGADIPVFIHGFAAFAEGIGERLQVVSPPEPWYLVIAPDAHVSTAEVFQDPLLPRNTPKLAIDTLMSQAWINDCQKLVVSKYPQVAKALGWLLEYAPSRMTGTGACVFGEFTQQQQALAALAKLPSDMQGFVAKGMNISPLITRLNHP.

Residue lysine 14 is part of the active site. 98 to 108 (PMGGGLGGGSS) provides a ligand contact to ATP. Residue aspartate 140 is part of the active site.

This sequence belongs to the GHMP kinase family. IspE subfamily.

It catalyses the reaction 4-CDP-2-C-methyl-D-erythritol + ATP = 4-CDP-2-C-methyl-D-erythritol 2-phosphate + ADP + H(+). It participates in isoprenoid biosynthesis; isopentenyl diphosphate biosynthesis via DXP pathway; isopentenyl diphosphate from 1-deoxy-D-xylulose 5-phosphate: step 3/6. Catalyzes the phosphorylation of the position 2 hydroxy group of 4-diphosphocytidyl-2C-methyl-D-erythritol. The chain is 4-diphosphocytidyl-2-C-methyl-D-erythritol kinase from Shewanella putrefaciens (strain CN-32 / ATCC BAA-453).